The chain runs to 391 residues: DNA replication and repair protein RecF (391 aa).

30 to 37 (GSNGQGKT) provides a ligand contact to ATP.

It belongs to the RecF family.

It localises to the cytoplasm. Its function is as follows. The RecF protein is involved in DNA metabolism; it is required for DNA replication and normal SOS inducibility. RecF binds preferentially to single-stranded, linear DNA. It also seems to bind ATP. This is DNA replication and repair protein RecF from Saccharopolyspora erythraea (strain ATCC 11635 / DSM 40517 / JCM 4748 / NBRC 13426 / NCIMB 8594 / NRRL 2338).